A 432-amino-acid polypeptide reads, in one-letter code: Fibrinogen gamma chain (432 aa).

The N-terminal stretch at 1-24 (MGRIGTPVFLAFLSALTCSLQVHA) is a signal peptide. The region spanning 169–412 (KISPITGKDC…MTTMKLLPMG (244 aa)) is the Fibrinogen C-terminal domain. The cysteines at positions 178 and 207 are disulfide-linked. Asparagine 227 is a glycosylation site (N-linked (GlcNAc...) asparagine). Positions 340, 342, 344, and 346 each coordinate Ca(2+). A disulfide bridge connects residues cysteine 348 and cysteine 361. The interval 413-432 (RDLSGHGGQQQSKGNSRGDN) is disordered. Over residues 421–432 (QQQSKGNSRGDN) the composition is skewed to polar residues.

As to quaternary structure, heterohexamer; disulfide linked. Contains 2 sets of 3 non-identical chains (alpha, beta and gamma). The 2 heterotrimers are in head to head conformation with the N-termini in a small central domain. In terms of processing, conversion of fibrinogen to fibrin is triggered by thrombin, which cleaves fibrinopeptides A and B from alpha and beta chains, and thus exposes the N-terminal polymerization sites responsible for the formation of the soft clot. The soft clot is converted into the hard clot by factor XIIIA which catalyzes the epsilon-(gamma-glutamyl)lysine cross-linking between gamma chains (stronger) and between alpha chains (weaker) of different monomers.

The protein localises to the secreted. Its function is as follows. Together with fibrinogen alpha (FGA) and fibrinogen beta (FGB), polymerizes to form an insoluble fibrin matrix. Has a major function in hemostasis as one of the primary components of blood clots. The chain is Fibrinogen gamma chain (FGG) from Petromyzon marinus (Sea lamprey).